The sequence spans 32 residues: Secreted proteinase (32 aa).

The segment at 1-32 (DTANDPKYGSQYAPQKVNADVDQGVXXXHPEL) is disordered. Catalysis depends on Asp-22, which acts as the Charge relay system.

It belongs to the peptidase S8 family.

Its subcellular location is the secreted. The sequence is that of Secreted proteinase from Haloferax mediterranei (Halobacterium mediterranei).